Consider the following 426-residue polypeptide: Serine--tRNA ligase (426 aa).

233 to 235 serves as a coordination point for L-serine; that stretch reads TAE. 264–266 serves as a coordination point for ATP; that stretch reads RSE. Glutamate 287 serves as a coordination point for L-serine. Residue 351 to 354 participates in ATP binding; that stretch reads EISS. Serine 387 contacts L-serine.

The protein belongs to the class-II aminoacyl-tRNA synthetase family. Type-1 seryl-tRNA synthetase subfamily. Homodimer. The tRNA molecule binds across the dimer.

It is found in the cytoplasm. It catalyses the reaction tRNA(Ser) + L-serine + ATP = L-seryl-tRNA(Ser) + AMP + diphosphate + H(+). It carries out the reaction tRNA(Sec) + L-serine + ATP = L-seryl-tRNA(Sec) + AMP + diphosphate + H(+). It functions in the pathway aminoacyl-tRNA biosynthesis; selenocysteinyl-tRNA(Sec) biosynthesis; L-seryl-tRNA(Sec) from L-serine and tRNA(Sec): step 1/1. Catalyzes the attachment of serine to tRNA(Ser). Is also able to aminoacylate tRNA(Sec) with serine, to form the misacylated tRNA L-seryl-tRNA(Sec), which will be further converted into selenocysteinyl-tRNA(Sec). This chain is Serine--tRNA ligase, found in Clostridium botulinum (strain Hall / ATCC 3502 / NCTC 13319 / Type A).